Reading from the N-terminus, the 107-residue chain is RNA polymerase II transcriptional coactivator KIWI (107 aa).

The interval methionine 1 to aspartate 40 is disordered. The span at arginine 7–alanine 23 shows a compositional bias: basic and acidic residues.

Belongs to the transcriptional coactivator PC4 family.

The protein resides in the nucleus. General coactivator that functions cooperatively with TAFs and mediates functional interactions between upstream activators and the general transcriptional machinery. Binds single-stranded DNA. The sequence is that of RNA polymerase II transcriptional coactivator KIWI (KIWI) from Arabidopsis thaliana (Mouse-ear cress).